The following is a 197-amino-acid chain: NADH-quinone oxidoreductase subunit B (197 aa).

[4Fe-4S] cluster is bound by residues cysteine 63, cysteine 64, cysteine 129, and cysteine 159.

This sequence belongs to the complex I 20 kDa subunit family. In terms of assembly, NDH-1 is composed of 14 different subunits. Subunits NuoB, C, D, E, F, and G constitute the peripheral sector of the complex. [4Fe-4S] cluster serves as cofactor.

Its subcellular location is the cell inner membrane. The catalysed reaction is a quinone + NADH + 5 H(+)(in) = a quinol + NAD(+) + 4 H(+)(out). Its function is as follows. NDH-1 shuttles electrons from NADH, via FMN and iron-sulfur (Fe-S) centers, to quinones in the respiratory chain. The immediate electron acceptor for the enzyme in this species is believed to be a menaquinone. Couples the redox reaction to proton translocation (for every two electrons transferred, four hydrogen ions are translocated across the cytoplasmic membrane), and thus conserves the redox energy in a proton gradient. In Bacteroides thetaiotaomicron (strain ATCC 29148 / DSM 2079 / JCM 5827 / CCUG 10774 / NCTC 10582 / VPI-5482 / E50), this protein is NADH-quinone oxidoreductase subunit B.